The following is a 146-amino-acid chain: Hemoglobin subunit beta (146 aa).

The region spanning 2 to 146 (HWTETERATI…VVAALSREYH (145 aa)) is the Globin domain. His63 and His92 together coordinate heme b.

Belongs to the globin family. Heterotetramer of two alpha chains and two beta chains (an easy dimerization is also reported). Red blood cells.

Functionally, involved in oxygen transport from the lung to the various peripheral tissues. The sequence is that of Hemoglobin subunit beta (HBB) from Latimeria chalumnae (Coelacanth).